Here is a 284-residue protein sequence, read N- to C-terminus: Phosphatidylglycerol--prolipoprotein diacylglyceryl transferase (284 aa).

7 helical membrane passes run 14 to 34, 62 to 82, 106 to 126, 136 to 156, 190 to 210, 218 to 238, and 252 to 272; these read IAFS…ACAI, YFLW…ILIY, FVGI…IASY, LLIY…FGRI, PSQL…VMWA, GLLI…AEFY, and LSMG…ILLY. Arginine 155 serves as a coordination point for a 1,2-diacyl-sn-glycero-3-phospho-(1'-sn-glycerol).

Belongs to the Lgt family.

The protein localises to the cell inner membrane. It carries out the reaction L-cysteinyl-[prolipoprotein] + a 1,2-diacyl-sn-glycero-3-phospho-(1'-sn-glycerol) = an S-1,2-diacyl-sn-glyceryl-L-cysteinyl-[prolipoprotein] + sn-glycerol 1-phosphate + H(+). It participates in protein modification; lipoprotein biosynthesis (diacylglyceryl transfer). Its function is as follows. Catalyzes the transfer of the diacylglyceryl group from phosphatidylglycerol to the sulfhydryl group of the N-terminal cysteine of a prolipoprotein, the first step in the formation of mature lipoproteins. This Helicobacter pylori (strain ATCC 700392 / 26695) (Campylobacter pylori) protein is Phosphatidylglycerol--prolipoprotein diacylglyceryl transferase.